We begin with the raw amino-acid sequence, 92 residues long: Cell division topological specificity factor (92 aa).

This sequence belongs to the MinE family.

Its function is as follows. Prevents the cell division inhibition by proteins MinC and MinD at internal division sites while permitting inhibition at polar sites. This ensures cell division at the proper site by restricting the formation of a division septum at the midpoint of the long axis of the cell. The polypeptide is Cell division topological specificity factor (Symbiobacterium thermophilum (strain DSM 24528 / JCM 14929 / IAM 14863 / T)).